Reading from the N-terminus, the 194-residue chain is dITP/XTP pyrophosphatase (194 aa).

8-13 (TKNKGK) lines the substrate pocket. Mg(2+) is bound by residues Glu-41 and Asp-70. The Proton acceptor role is filled by Asp-70. Residues Ser-71, 153–156 (FGYD), Lys-176, and 181–182 (HR) contribute to the substrate site.

Belongs to the HAM1 NTPase family. Homodimer. Requires Mg(2+) as cofactor.

It catalyses the reaction XTP + H2O = XMP + diphosphate + H(+). It carries out the reaction dITP + H2O = dIMP + diphosphate + H(+). The enzyme catalyses ITP + H2O = IMP + diphosphate + H(+). Its function is as follows. Pyrophosphatase that catalyzes the hydrolysis of nucleoside triphosphates to their monophosphate derivatives, with a high preference for the non-canonical purine nucleotides XTP (xanthosine triphosphate), dITP (deoxyinosine triphosphate) and ITP. Seems to function as a house-cleaning enzyme that removes non-canonical purine nucleotides from the nucleotide pool, thus preventing their incorporation into DNA/RNA and avoiding chromosomal lesions. The sequence is that of dITP/XTP pyrophosphatase from Halalkalibacterium halodurans (strain ATCC BAA-125 / DSM 18197 / FERM 7344 / JCM 9153 / C-125) (Bacillus halodurans).